A 570-amino-acid chain; its full sequence is Sulfite reductase [NADPH] hemoprotein beta-component (570 aa).

[4Fe-4S] cluster contacts are provided by Cys-434, Cys-440, Cys-479, and Cys-483. Residue Cys-483 participates in siroheme binding.

This sequence belongs to the nitrite and sulfite reductase 4Fe-4S domain family. In terms of assembly, alpha(8)-beta(8). The alpha component is a flavoprotein, the beta component is a hemoprotein. The cofactor is siroheme. [4Fe-4S] cluster is required as a cofactor.

The catalysed reaction is hydrogen sulfide + 3 NADP(+) + 3 H2O = sulfite + 3 NADPH + 4 H(+). It participates in sulfur metabolism; hydrogen sulfide biosynthesis; hydrogen sulfide from sulfite (NADPH route): step 1/1. In terms of biological role, component of the sulfite reductase complex that catalyzes the 6-electron reduction of sulfite to sulfide. This is one of several activities required for the biosynthesis of L-cysteine from sulfate. The sequence is that of Sulfite reductase [NADPH] hemoprotein beta-component from Escherichia coli O127:H6 (strain E2348/69 / EPEC).